Reading from the N-terminus, the 154-residue chain is MutT-like protein (154 aa).

The Nudix hydrolase domain occupies 15-136 (PLHSVSVAGV…YAIRLLDALD (122 aa)). Residues Gly48, Glu63, Glu66, and Glu67 each contribute to the Mg(2+) site. The Nudix box motif lies at 48-69 (GVLELDETPETGVAREVWEETG).

The protein belongs to the Nudix hydrolase family.

This is MutT-like protein from Streptomyces ambofaciens.